Reading from the N-terminus, the 473-residue chain is Photosystem II CP43 reaction center protein (473 aa).

A propeptide spanning residues 1–14 (MKTLYSLRRFYHVE) is cleaved from the precursor. T15 carries the post-translational modification N-acetylthreonine. A Phosphothreonine modification is found at T15. 5 helical membrane-spanning segments follow: residues 69–93 (LFEVAHFVPEKPMYEQGLILLPHLA), 134–155 (LLGPETLEESFPFFGYVWKDRN), 178–200 (KALYFGGVYDTWAPGGGDVRKIT), 255–275 (KPFAWARRALVWSGEAYLSYS), and 291–312 (WFNNTAYPSEFYGPTGPEASQA). Residue E367 coordinates [CaMn4O5] cluster. Residues 447-471 (RARAAAAGFEKGIDRDFEPVLSMTP) form a helical membrane-spanning segment.

The protein belongs to the PsbB/PsbC family. PsbC subfamily. As to quaternary structure, PSII is composed of 1 copy each of membrane proteins PsbA, PsbB, PsbC, PsbD, PsbE, PsbF, PsbH, PsbI, PsbJ, PsbK, PsbL, PsbM, PsbT, PsbX, PsbY, PsbZ, Psb30/Ycf12, at least 3 peripheral proteins of the oxygen-evolving complex and a large number of cofactors. It forms dimeric complexes. Binds multiple chlorophylls and provides some of the ligands for the Ca-4Mn-5O cluster of the oxygen-evolving complex. It may also provide a ligand for a Cl- that is required for oxygen evolution. PSII binds additional chlorophylls, carotenoids and specific lipids. is required as a cofactor.

The protein resides in the plastid. It localises to the chloroplast thylakoid membrane. Its function is as follows. One of the components of the core complex of photosystem II (PSII). It binds chlorophyll and helps catalyze the primary light-induced photochemical processes of PSII. PSII is a light-driven water:plastoquinone oxidoreductase, using light energy to abstract electrons from H(2)O, generating O(2) and a proton gradient subsequently used for ATP formation. This chain is Photosystem II CP43 reaction center protein, found in Aethionema cordifolium (Lebanon stonecress).